A 122-amino-acid chain; its full sequence is Large ribosomal subunit protein uL14 (122 aa).

Belongs to the universal ribosomal protein uL14 family. As to quaternary structure, part of the 50S ribosomal subunit. Forms a cluster with proteins L3 and L19. In the 70S ribosome, L14 and L19 interact and together make contacts with the 16S rRNA in bridges B5 and B8.

Functionally, binds to 23S rRNA. Forms part of two intersubunit bridges in the 70S ribosome. This is Large ribosomal subunit protein uL14 from Xanthomonas oryzae pv. oryzae (strain MAFF 311018).